Consider the following 997-residue polypeptide: Protein translocase subunit SecA (997 aa).

Residues glutamine 84, glycine 102–threonine 106, and aspartate 582 each bind ATP. Positions proline 950–lysine 997 are disordered. Positions alanine 957–arginine 971 are enriched in basic and acidic residues. A compositionally biased stretch (basic residues) spans glutamate 984 to lysine 997.

This sequence belongs to the SecA family. As to quaternary structure, part of the essential Sec protein translocation apparatus which comprises SecA, SecYEG and auxiliary proteins SecDF. Other proteins may also be involved. Monomer and homodimer.

Its subcellular location is the cell inner membrane. The protein localises to the cytoplasm. It catalyses the reaction ATP + H2O + cellular proteinSide 1 = ADP + phosphate + cellular proteinSide 2.. Its function is as follows. Part of the Sec protein translocase complex. Interacts with the SecYEG preprotein conducting channel. Has a central role in coupling the hydrolysis of ATP to the transfer of proteins into and across the cell membrane, serving as an ATP-driven molecular motor driving the stepwise translocation of polypeptide chains across the membrane. This is Protein translocase subunit SecA from Thermus thermophilus (strain ATCC 27634 / DSM 579 / HB8).